Reading from the N-terminus, the 729-residue chain is Receptor-like protein 2 (729 aa).

The signal sequence occupies residues 1-44 (MRSKAKGLVRPLITKPVQPLSSHMHLFLLCILFLSALFLTLSEA). Positions 45–82 (VCNLQDRESLIWFSGNVSSSVSPLNWNLSIDCCSWEGI) are N-cap. Over 45-707 (VCNLQDRESL…AKENDELNRT (663 aa)) the chain is Extracellular. 2 N-linked (GlcNAc...) asparagine glycosylation sites follow: N60 and N71. 20 LRR repeats span residues 89–113 (DSHV…VQNI), 114–137 (HRLS…FFST), 139–163 (DQLM…AFGN), 168–193 (FFSI…VYLQ), 195–219 (TINL…MCRS), 220–244 (SPQL…LGRC), 245–268 (LRLT…IYNL), 269–292 (SELE…ITRL), 293–316 (RKLT…IGNL), 317–340 (SSLR…LANC), 342–364 (KLVK…EFSQ), 365–389 (LQSL…IFSC), 391–413 (SLTA…VLEL), 414–437 (ESLS…SILQ), 439–464 (CRKL…DFLS), 468–492 (FPKL…LINL), 493–515 (NKVE…WLGT), 516–540 (LPDL…LFQL), 542–560 (ALMS…PIFL), and 561–584 (NPNN…IYIR). N-linked (GlcNAc...) asparagine glycosylation is found at N145 and N163. 2 N-linked (GlcNAc...) asparagine glycosylation sites follow: N202 and N205. Residues N256, N267, N288, N315, N330, and N339 are each glycosylated (N-linked (GlcNAc...) asparagine). Residue N375 is glycosylated (N-linked (GlcNAc...) asparagine). The N-linked (GlcNAc...) asparagine glycan is linked to N428. Residues N564, N587, N611, N622, N635, N657, and N705 are each glycosylated (N-linked (GlcNAc...) asparagine). LRR repeat units lie at residues 599–623 (LKVL…LSNL), 624–647 (TNLE…LTNL), and 649–672 (FLSY…QFDT). Positions 690 to 707 (LTSCKPTRAKENDELNRT) are C-cap/acidic domain. A helical membrane pass occupies residues 708-728 (FLMGIAIGYFLSFVSILVVRA). Residue W729 is a topological domain, cytoplasmic.

It belongs to the RLP family.

Its subcellular location is the cell membrane. Involved in the perception of CLV3 and CLV3-like peptides, that act as extracellular signals regulating meristems maintenance. The chain is Receptor-like protein 2 from Arabidopsis thaliana (Mouse-ear cress).